A 338-amino-acid chain; its full sequence is Ketol-acid reductoisomerase (NADP(+)) (338 aa).

A KARI N-terminal Rossmann domain is found at 1–181 (MKIYYDKDCN…GGGKAGIIET (181 aa)). NADP(+)-binding positions include 24–27 (YGSQ), Lys-47, Ser-50, Ser-52, and 82–85 (DEIQ). His-107 is a catalytic residue. An NADP(+)-binding site is contributed by Gly-133. The region spanning 182–327 (SFKEETETDL…ARLRSMMAWI (146 aa)) is the KARI C-terminal knotted domain. 4 residues coordinate Mg(2+): Asp-190, Glu-194, Glu-226, and Glu-230. Ser-251 is a substrate binding site.

Belongs to the ketol-acid reductoisomerase family. It depends on Mg(2+) as a cofactor.

It carries out the reaction (2R)-2,3-dihydroxy-3-methylbutanoate + NADP(+) = (2S)-2-acetolactate + NADPH + H(+). The catalysed reaction is (2R,3R)-2,3-dihydroxy-3-methylpentanoate + NADP(+) = (S)-2-ethyl-2-hydroxy-3-oxobutanoate + NADPH + H(+). The protein operates within amino-acid biosynthesis; L-isoleucine biosynthesis; L-isoleucine from 2-oxobutanoate: step 2/4. It functions in the pathway amino-acid biosynthesis; L-valine biosynthesis; L-valine from pyruvate: step 2/4. Functionally, involved in the biosynthesis of branched-chain amino acids (BCAA). Catalyzes an alkyl-migration followed by a ketol-acid reduction of (S)-2-acetolactate (S2AL) to yield (R)-2,3-dihydroxy-isovalerate. In the isomerase reaction, S2AL is rearranged via a Mg-dependent methyl migration to produce 3-hydroxy-3-methyl-2-ketobutyrate (HMKB). In the reductase reaction, this 2-ketoacid undergoes a metal-dependent reduction by NADPH to yield (R)-2,3-dihydroxy-isovalerate. The sequence is that of Ketol-acid reductoisomerase (NADP(+)) from Geotalea uraniireducens (strain Rf4) (Geobacter uraniireducens).